An 874-amino-acid polypeptide reads, in one-letter code: Probable leucine--tRNA ligase, cytoplasmic (874 aa).

Positions 36-46 (PYMNGRLHLGH) match the 'HIGH' region motif. The 'KMSKS' region signature appears at 544–548 (KMSKS). Residue Lys547 participates in ATP binding.

It belongs to the class-I aminoacyl-tRNA synthetase family.

The protein localises to the cytoplasm. The catalysed reaction is tRNA(Leu) + L-leucine + ATP = L-leucyl-tRNA(Leu) + AMP + diphosphate. The sequence is that of Probable leucine--tRNA ligase, cytoplasmic from Encephalitozoon cuniculi (strain GB-M1) (Microsporidian parasite).